The primary structure comprises 156 residues: ATP synthase subunit b (156 aa).

A helical transmembrane segment spans residues 7-29 (LIGQSVAFLIFVWFCMKFVWPPL).

The protein belongs to the ATPase B chain family. In terms of assembly, F-type ATPases have 2 components, F(1) - the catalytic core - and F(0) - the membrane proton channel. F(1) has five subunits: alpha(3), beta(3), gamma(1), delta(1), epsilon(1). F(0) has three main subunits: a(1), b(2) and c(10-14). The alpha and beta chains form an alternating ring which encloses part of the gamma chain. F(1) is attached to F(0) by a central stalk formed by the gamma and epsilon chains, while a peripheral stalk is formed by the delta and b chains.

The protein localises to the cell inner membrane. Functionally, f(1)F(0) ATP synthase produces ATP from ADP in the presence of a proton or sodium gradient. F-type ATPases consist of two structural domains, F(1) containing the extramembraneous catalytic core and F(0) containing the membrane proton channel, linked together by a central stalk and a peripheral stalk. During catalysis, ATP synthesis in the catalytic domain of F(1) is coupled via a rotary mechanism of the central stalk subunits to proton translocation. In terms of biological role, component of the F(0) channel, it forms part of the peripheral stalk, linking F(1) to F(0). The sequence is that of ATP synthase subunit b from Shewanella denitrificans (strain OS217 / ATCC BAA-1090 / DSM 15013).